We begin with the raw amino-acid sequence, 128 residues long: Disintegrin ocellatusin (128 aa).

Positions 1–20 are cleaved as a signal peptide; sequence MIPVLLVTICLAVFPFQGSS. The propeptide occupies 21–65; that stretch reads IILESGNINDYEIVYPKKVAVLPTGAMNSAHPCYDPVTCQPKEKE. Positions 26–112 constitute a Disintegrin domain; it reads GNINDYEIVY…DCPRNPYKGE (87 aa). Disulfide bonds link cysteine 53–cysteine 59, cysteine 67–cysteine 76, cysteine 72–cysteine 97, cysteine 73–cysteine 102, and cysteine 85–cysteine 104. The Cell attachment site signature appears at 89–91; sequence RGD. Residues 116 to 128 constitute a propeptide that is removed on maturation; that stretch reads MEWPAPAKGSVLM.

In terms of assembly, monomer. As to expression, expressed by the venom gland.

Its subcellular location is the secreted. Functionally, the disintegrin ocellatusin-10c1 is a poor inhibitor of platelet aggregation. The disintegrin inhibits the adhesion of cells expressing the RGD-dependent integrin alpha-5/beta-1 (ITGA5/ITGB1) to immobilized fibronectin. Inhibition on alpha-2b/beta-3 (ITGA2B/ITGB3) is low, and there is no inhibition on alpha-1/beta-1 (ITGA1/ITGB1), alpha-2/beta-1 (ITGA2/ITGB1) and alpha-6/beta-1 (ITGA6/ITGB1). Its function is as follows. The short monomeric disintegrin ocellatusin inhibits ADP-induced platelet aggregation (IC(50)=168 nM). Inhibits alpha-5/beta-1 (ITGA5/ITGB1) integrin and induces the expression of a ligand-induced binding site epitope on beta-1 integrin subunit. Has a direct chemotactic stimulus on human neutrophils in vitro. The chain is Disintegrin ocellatusin from Echis ocellatus (Ocellated saw-scaled viper).